The primary structure comprises 376 residues: Putative F-box only protein 9 (376 aa).

Residues 1–44 (MSDLPPDLVEDILSRVPATSLKRLRFTCKQWNSLFKNRRFTEKH) form the F-box domain.

The protein is Putative F-box only protein 9 (FBX9) of Arabidopsis thaliana (Mouse-ear cress).